The chain runs to 256 residues: MNNIWWQTKGQGNVHLVLLHGWGLNAEVWRCIDEELSSHFTLHLVDLPGFGRSRGFGALSLADMAEAVLRQAPDKAIWLGWSLGGLVASQIALTHPERVQALVTVASSPCFSARDEWPGIKPDVLAGFQQQLSDDFQRTVERFLALQTMGTETARQDARALKKTVLALPMPEVDVLNGGLEILKTVDLRLPLQNVSMPFLRLYGYLDGLVPRKVVPMLDKLWPHSESYIFAKAAHAPFISHPVEFHHLLVALKQRV.

The 228-residue stretch at 15–242 (HLVLLHGWGL…AAHAPFISHP (228 aa)) folds into the AB hydrolase-1 domain. Residues Trp22, 82–83 (SL), and 143–147 (FLALQ) contribute to the substrate site. Residue Ser82 is the Nucleophile of the active site. Active-site residues include Asp207 and His235. His235 is a binding site for substrate.

It belongs to the AB hydrolase superfamily. Carboxylesterase BioH family. In terms of assembly, monomer.

The protein localises to the cytoplasm. The enzyme catalyses 6-carboxyhexanoyl-[ACP] methyl ester + H2O = 6-carboxyhexanoyl-[ACP] + methanol + H(+). The protein operates within cofactor biosynthesis; biotin biosynthesis. Its function is as follows. The physiological role of BioH is to remove the methyl group introduced by BioC when the pimeloyl moiety is complete. It allows to synthesize pimeloyl-ACP via the fatty acid synthetic pathway through the hydrolysis of the ester bonds of pimeloyl-ACP esters. The chain is Pimeloyl-[acyl-carrier protein] methyl ester esterase from Escherichia coli O45:K1 (strain S88 / ExPEC).